A 190-amino-acid polypeptide reads, in one-letter code: Protein E6C (190 aa).

Residues 1 to 15 (MFGVAKPPPSPIPKP) are compositionally biased toward pro residues. Disordered regions lie at residues 1–110 (MFGV…EGRR) and 160–190 (PRTPGPVAPIPELPGEADDPPTRTPPPPPDD). Over residues 36-46 (ARQRASTRHRP) the composition is skewed to basic residues. Composition is skewed to pro residues over residues 162-171 (TPGPVAPIPE) and 181-190 (TRTPPPPPDD).

The protein is Protein E6C (13) of Equus caballus (Horse).